The chain runs to 233 residues: Large ribosomal subunit protein uL1 (233 aa).

It belongs to the universal ribosomal protein uL1 family. As to quaternary structure, part of the 50S ribosomal subunit.

Its function is as follows. Binds directly to 23S rRNA. The L1 stalk is quite mobile in the ribosome, and is involved in E site tRNA release. Functionally, protein L1 is also a translational repressor protein, it controls the translation of the L11 operon by binding to its mRNA. The protein is Large ribosomal subunit protein uL1 of Shewanella denitrificans (strain OS217 / ATCC BAA-1090 / DSM 15013).